The primary structure comprises 334 residues: Sulfhydrogenase 2 subunit beta (334 aa).

4Fe-4S ferredoxin-type domains follow at residues 220–250 and 294–328; these read KVWK…VCDT and CKNY…VLDE. [4Fe-4S] cluster-binding residues include Cys-229, Cys-232, Cys-235, Cys-239, Cys-306, Cys-309, Cys-312, and Cys-316.

In terms of assembly, dimer of heterotetramer of alpha, beta, gamma and delta subunits. The nickel-containing alpha and delta subunits constitute the hydrogenase activity. The beta and gamma subunits (flavin-containing dimer) constitute the sulfur reductase activity. [4Fe-4S] cluster serves as cofactor.

It localises to the cytoplasm. The catalysed reaction is n sulfur + H2 = (n-1) sulfur + hydrogen sulfide + H(+). Functionally, part of a bifunctional enzyme complex that functions as a hydrogen-evolving hydrogenase with sulfur-reducing activity. May play a role in hydrogen cycling during fermentative growth. Activity exhibited with NAD in addition to NADPH. The beta and gamma subunits form the sulfur-reducing component that catalyzes the cytoplasmic production of hydrogen sulfide in the presence of elemental sulfur. The sequence is that of Sulfhydrogenase 2 subunit beta from Pyrococcus furiosus (strain ATCC 43587 / DSM 3638 / JCM 8422 / Vc1).